Reading from the N-terminus, the 147-residue chain is 3-dehydroquinate dehydratase (147 aa).

The active-site Proton acceptor is Tyr-23. Positions 74, 80, and 87 each coordinate substrate. His-100 serves as the catalytic Proton donor. Residues 101-102 (LS) and Arg-111 each bind substrate.

It belongs to the type-II 3-dehydroquinase family. In terms of assembly, homododecamer.

It catalyses the reaction 3-dehydroquinate = 3-dehydroshikimate + H2O. It participates in metabolic intermediate biosynthesis; chorismate biosynthesis; chorismate from D-erythrose 4-phosphate and phosphoenolpyruvate: step 3/7. In terms of biological role, catalyzes a trans-dehydration via an enolate intermediate. The chain is 3-dehydroquinate dehydratase from Clostridium botulinum (strain Loch Maree / Type A3).